The sequence spans 556 residues: 2-succinyl-5-enolpyruvyl-6-hydroxy-3-cyclohexene-1-carboxylate synthase (556 aa).

The protein belongs to the TPP enzyme family. MenD subfamily. As to quaternary structure, homodimer. The cofactor is Mg(2+). Mn(2+) serves as cofactor. Thiamine diphosphate is required as a cofactor.

It catalyses the reaction isochorismate + 2-oxoglutarate + H(+) = 5-enolpyruvoyl-6-hydroxy-2-succinyl-cyclohex-3-ene-1-carboxylate + CO2. The protein operates within quinol/quinone metabolism; 1,4-dihydroxy-2-naphthoate biosynthesis; 1,4-dihydroxy-2-naphthoate from chorismate: step 2/7. Its pathway is quinol/quinone metabolism; menaquinone biosynthesis. Its function is as follows. Catalyzes the thiamine diphosphate-dependent decarboxylation of 2-oxoglutarate and the subsequent addition of the resulting succinic semialdehyde-thiamine pyrophosphate anion to isochorismate to yield 2-succinyl-5-enolpyruvyl-6-hydroxy-3-cyclohexene-1-carboxylate (SEPHCHC). The polypeptide is 2-succinyl-5-enolpyruvyl-6-hydroxy-3-cyclohexene-1-carboxylate synthase (Klebsiella pneumoniae subsp. pneumoniae (strain ATCC 700721 / MGH 78578)).